Consider the following 339-residue polypeptide: Nicotinate-nucleotide--dimethylbenzimidazole phosphoribosyltransferase (339 aa).

Catalysis depends on glutamate 306, which acts as the Proton acceptor.

Belongs to the CobT family.

It carries out the reaction 5,6-dimethylbenzimidazole + nicotinate beta-D-ribonucleotide = alpha-ribazole 5'-phosphate + nicotinate + H(+). The protein operates within nucleoside biosynthesis; alpha-ribazole biosynthesis; alpha-ribazole from 5,6-dimethylbenzimidazole: step 1/2. Functionally, catalyzes the synthesis of alpha-ribazole-5'-phosphate from nicotinate mononucleotide (NAMN) and 5,6-dimethylbenzimidazole (DMB). This is Nicotinate-nucleotide--dimethylbenzimidazole phosphoribosyltransferase from Brucella abortus (strain S19).